A 197-amino-acid polypeptide reads, in one-letter code: Probable S-adenosylmethionine-dependent methyltransferase MJ0882 (197 aa).

S-adenosyl-L-methionine is bound by residues 63–67 (GCGYG), Asp-84, and Asn-129. 129–132 (NPPI) contacts substrate.

The protein belongs to the methyltransferase superfamily.

Its function is as follows. Probable methyltransferase that uses S-adenosylmethionine as the methyl donor. Binds neither NAD nor NADP in vitro. The sequence is that of Probable S-adenosylmethionine-dependent methyltransferase MJ0882 from Methanocaldococcus jannaschii (strain ATCC 43067 / DSM 2661 / JAL-1 / JCM 10045 / NBRC 100440) (Methanococcus jannaschii).